The primary structure comprises 933 residues: MTTGFLQKIFGSRNQRLVKQYQKTVATINALETQIEKLTDDQLRGKTDEFRQRVAAGESLDKLLPEAFAVCREASRRVLKMRHFDVQMIGGMVLHYGKIAEMRTGEGKTLVATLPVYLNALAGRGVHVVTVNDYLAQRDAEWMARLYNFLGLSVGINLSGMEHDQKQQAYAADITYGTNNEFGFDYLRDNMVYETDARVQRALNFAVVDEVDSILIDEARTPLIISGQAEDHTELYVRMNALPPLLERQIGEEKADGTGVEKPGDYTLDEKARQVFLTESGHEKAERLLAEWGLIGEGESLYAPQNITLMHHVYAALRAHTLFHKDQHYVVQNGEVVIVDEFTGRLMAGRRWSDGLHQAVEAKEHVKIQSENQTLASITFQNYFRMYAKLAGMTGTADTEAYEFNEIYGLETVVIPTNRPPKRIDKQDQIYKTAKERYDAVIRDIRDCYERGQPVLVGTTSIENSELLSHLLKQAGLPHEVLNAKQHEREAAIVAEAGRPKRITIATNMAGRGTDIVLGGNAEKQAAFIEADDSIPADEKARRIQKLHDEWETLHEEVKAAGGLHIIGTERHESRRIDNQLRGRAGRQGDPGSSRFYLSLDDPLLRIFAGDRVRSIMDRLKMPEGEAIEAGIVTRSIESAQRKVEARNFDIRKQLLEYDDVSNDQRKVIYQQRNELLEAHDITETITAMRHGVITEVVRQFVPEGSIEEQWDVPELEEALRNDWQLDLAIQEMVNESSSITAEEILDAVTTAADEQYEAKVAMVGRESFSAFERSVMLQTVDRLWREHLAALDHLRQGIHLRGYAQKNPKQEYKREAFELFAAMLDAIKQEVTRIVMNVQIQSPEQLEEAAEQIEERGGHLENVEYQHADYADAGAPVANVTTAAAAATATADMVGSAMTHGGPGGEMPKVGRNDPCPCGSGKKYKQCHGKLS.

Residues glutamine 87, 105–109 (GEGKT), and aspartate 515 contribute to the ATP site. Residues cysteine 917, cysteine 919, cysteine 928, and histidine 929 each contribute to the Zn(2+) site.

The protein belongs to the SecA family. Monomer and homodimer. Part of the essential Sec protein translocation apparatus which comprises SecA, SecYEG and auxiliary proteins SecDF-YajC and YidC. Zn(2+) serves as cofactor.

It is found in the cell inner membrane. Its subcellular location is the cytoplasm. The catalysed reaction is ATP + H2O + cellular proteinSide 1 = ADP + phosphate + cellular proteinSide 2.. In terms of biological role, part of the Sec protein translocase complex. Interacts with the SecYEG preprotein conducting channel. Has a central role in coupling the hydrolysis of ATP to the transfer of proteins into and across the cell membrane, serving both as a receptor for the preprotein-SecB complex and as an ATP-driven molecular motor driving the stepwise translocation of polypeptide chains across the membrane. The protein is Protein translocase subunit SecA of Burkholderia cenocepacia (strain ATCC BAA-245 / DSM 16553 / LMG 16656 / NCTC 13227 / J2315 / CF5610) (Burkholderia cepacia (strain J2315)).